A 100-amino-acid chain; its full sequence is UPF0235 protein Cvib_0403 (100 aa).

The protein belongs to the UPF0235 family.

The sequence is that of UPF0235 protein Cvib_0403 from Chlorobium phaeovibrioides (strain DSM 265 / 1930) (Prosthecochloris vibrioformis (strain DSM 265)).